The chain runs to 1107 residues: OTU domain-containing protein 4 (1107 aa).

N-acetylmethionine is present on M1. The region spanning 34–155 (LYRKLVAKDG…GNHYDIVYPI (122 aa)) is the OTU domain. Residues 39 to 45 (VAKDGSC) form a cys-loop region. D42 is an active-site residue. Residue C45 is the Nucleophile of the active site. Positions 94 to 104 (LENPQEWVGQV) are variable-loop. Y120 carries the post-translational modification Phosphotyrosine. Phosphoserine occurs at positions 126 and 128. A Phosphothreonine modification is found at T131. A his-loop region spans residues 143–148 (FSNGNH). H148 is an active-site residue. Phosphoserine occurs at positions 166, 199, 202, and 204. Acidic residues predominate over residues 195–206 (EESNSEISDSED). Disordered regions lie at residues 195–239 (EESN…SADL) and 322–431 (KHTP…DFDH). The span at 226 to 236 (GSENPKNNGNS) shows a compositional bias: polar residues. S340 carries the post-translational modification Phosphoserine. Residues 392 to 403 (SSHSTGSQSQKS) show a composition bias toward low complexity. Residues 419–431 (RKPDRERAEDFDH) are compositionally biased toward basic and acidic residues. Y438 is subject to Phosphotyrosine. The residue at position 442 (S442) is a Phosphoserine. Phosphotyrosine is present on Y459. The tract at residues 470-568 (PALSSSSVSQ…KPAEHIPLSN (99 aa)) is disordered. Low complexity predominate over residues 473 to 486 (SSSSVSQSPSQNSN). Residues 495 to 528 (HARDRKGSMRRADAEERKDKDSLRGHTHVDKKPE) are compositionally biased toward basic and acidic residues. Phosphoserine is present on residues S544 and S895. A disordered region spans residues 918–1107 (LSAASVSSKH…MGDGHRGQHT (190 aa)). Residues 963 to 994 (NREREPGSAEPEPKRTIQSLKEKPEKVKDPKT) are compositionally biased toward basic and acidic residues. 4 positions are modified to phosphoserine: S1000, S1005, S1016, and S1017. Over residues 1032 to 1041 (SKQFYNQTYG) the composition is skewed to polar residues. S1042 bears the Phosphoserine mark. Basic and acidic residues-rich tracts occupy residues 1060–1079 (VRGE…EGYQ) and 1089–1107 (YRGD…GQHT).

In terms of assembly, interacts with MYD88; the interaction is direct. Interacts with ALKBH3; the interaction is direct. Interacts with USP7; the interaction is direct. Interacts with USP9X; the interaction is direct. Phosphorylation at Ser-202 and Ser-204 activates 'Lys-63'-specific deubiquitinase activity. Induced upon stimulation with IL1B.

Its subcellular location is the cytoplasm. The protein resides in the nucleus. It carries out the reaction Thiol-dependent hydrolysis of ester, thioester, amide, peptide and isopeptide bonds formed by the C-terminal Gly of ubiquitin (a 76-residue protein attached to proteins as an intracellular targeting signal).. Phosphorylation on Ser-202 and Ser-204 induces 'Lys-63'-specific deubiquitinase activity. Its function is as follows. Deubiquitinase which hydrolyzes the isopeptide bond between the ubiquitin C-terminus and the lysine epsilon-amino group of the target protein. May negatively regulate inflammatory and pathogen recognition signaling in innate immune response. Upon phosphorylation at Ser-202 and Ser-204 residues, via IL-1 receptor and Toll-like receptor signaling pathway, specifically deubiquitinates 'Lys-63'-polyubiquitinated MYD88 adapter protein triggering down-regulation of NF-kappa-B-dependent transcription of inflammatory mediators. Independently of the catalytic activity, acts as a scaffold for alternative deubiquitinases to assemble specific deubiquitinase-substrate complexes. Associates with USP7 and USP9X deubiquitinases to stabilize alkylation repair enzyme ALKBH3, thereby promoting the repair of alkylated DNA lesions. In Mus musculus (Mouse), this protein is OTU domain-containing protein 4.